Here is a 254-residue protein sequence, read N- to C-terminus: Agamous-like MADS-box protein AGL9 homolog (254 aa).

In terms of domain architecture, MADS-box spans 3 to 57 (RGRVELKRIENKINRQVTFAKRRNGLLKKAYELSVLCDAEVALIIFSNRGKLYEF). The region spanning 91–181 (ELSSQQEYLK…RLRLADGYQM (91 aa)) is the K-box domain.

It is found in the nucleus. Its function is as follows. Probable transcription factor active in inflorescence development and floral organogenesis. The polypeptide is Agamous-like MADS-box protein AGL9 homolog (AGL9) (Sinapis alba (White mustard)).